A 92-amino-acid chain; its full sequence is Small ribosomal subunit protein uS19c (92 aa).

Belongs to the universal ribosomal protein uS19 family.

The protein resides in the plastid. Its subcellular location is the chloroplast. In terms of biological role, protein S19 forms a complex with S13 that binds strongly to the 16S ribosomal RNA. The polypeptide is Small ribosomal subunit protein uS19c (Lactuca sativa (Garden lettuce)).